The primary structure comprises 617 residues: MALLQIAEPGQSSAPHEHKLAAGIDLGTTNSLVASVRSGDAKTLTDDQGRSILPSVVNYAQDTALVGYEAKAKAEQEPENTIISVKRLIGRSLKDIQARYPSLPYQFKESDNGLPILQTAQGDKNPIEVSADILKSLGKRAEETLGGELAGVVITVPAYFDDAQRAGTKDAAKLAGLHVLRLLNEPTAAAIAYGLDSGQEGVIAVYDLGGGTFDISILRLSKGVFEVLATGGDSALGGDDFDHLLADYLMEQAGLEAPLSAEKNRALLNIATATKIAFSEQDCVDVDVFGWKGAVTREQFEELIRPLVKKTLMSCRRALKDADVDAEDVLEAVMVGGSTRTLLVREMVGEFFGRTPLTSINPDEVVAIGAGIQADILAGNKPDSEMLLLDVIPLSLGIETMGGLVEKIIPRNTTIPVARAQEFTTFKDGQTAMSVHTVQGEREMVDDCRSLARFSLKGIPPMVAGAAHIRVTYQVDADGLLSVTAMEKSTGVQAEIQVKPSYGLSDDEVANMLRDSMTYAKEDMQARALAEQRVEADRVIEGLIAAMQADGDELLSDQEKQDLVKVIEALIELRNGEDADAIEQGIKDTDKASQDFASRRMDKSIRAALSGQSVNDI.

Belongs to the heat shock protein 70 family.

Its function is as follows. Chaperone involved in the maturation of iron-sulfur cluster-containing proteins. Has a low intrinsic ATPase activity which is markedly stimulated by HscB. The protein is Chaperone protein HscA homolog of Vibrio campbellii (strain ATCC BAA-1116).